A 621-amino-acid chain; its full sequence is Myosin-binding protein C, slow-type (621 aa).

3 Ig-like C2-type domains span residues 1–53 (EEIV…VDLR), 54–142 (PLKI…HVID), and 144–241 (PKII…LWIS). Position 28 is a phosphothreonine (Thr28). Phosphoserine is present on Ser233. 3 Fibronectin type-III domains span residues 244–343 (LRLA…TSPP), 344–459 (TLLA…IEPP), and 556–621 (PPQA…VIGN). Thr420 bears the Phosphothreonine mark. Tyr445 carries the post-translational modification Phosphotyrosine. The Ig-like C2-type 4 domain occupies 459–553 (PKIRIPRHLK…ASIDIQIVDR (95 aa)).

The protein belongs to the immunoglobulin superfamily. MyBP family. In terms of assembly, interacts with USP25 (isoform USP25m only); the interaction prevents proteasomal degradation of MYBPC1.

In terms of biological role, thick filament-associated protein located in the crossbridge region of vertebrate striated muscle a bands. Slow skeletal protein that binds to both myosin and actin. In vitro, binds to native thin filaments and modifies the activity of actin-activated myosin ATPase. May modulate muscle contraction or may play a more structural role. This is Myosin-binding protein C, slow-type (Mybpc1) from Rattus norvegicus (Rat).